The sequence spans 166 residues: NADPH-dependent 7-cyano-7-deazaguanine reductase (166 aa).

C57 acts as the Thioimide intermediate in catalysis. Residue D64 is the Proton donor of the active site. Substrate is bound by residues 79–81 and 98–99; these read VES and HE.

The protein belongs to the GTP cyclohydrolase I family. QueF type 1 subfamily.

Its subcellular location is the cytoplasm. The catalysed reaction is 7-aminomethyl-7-carbaguanine + 2 NADP(+) = 7-cyano-7-deazaguanine + 2 NADPH + 3 H(+). Its pathway is tRNA modification; tRNA-queuosine biosynthesis. Functionally, catalyzes the NADPH-dependent reduction of 7-cyano-7-deazaguanine (preQ0) to 7-aminomethyl-7-deazaguanine (preQ1). The chain is NADPH-dependent 7-cyano-7-deazaguanine reductase from Staphylococcus saprophyticus subsp. saprophyticus (strain ATCC 15305 / DSM 20229 / NCIMB 8711 / NCTC 7292 / S-41).